A 356-amino-acid chain; its full sequence is 1,2-phenylacetyl-CoA epoxidase, subunit E (356 aa).

The FAD-binding FR-type domain occupies 2 to 106; it reads TTFHSLTVAK…MVPQGHFGYQ (105 aa). The tract at residues 112 to 228 is oxidoreductase; sequence QGRYLAIAAG…AAMMDDAETA (117 aa). Positions 262 to 354 constitute a 2Fe-2S ferredoxin-type domain; the sequence is QKVTVRQDGR…DVVVDFDAKG (93 aa). [2Fe-2S] cluster contacts are provided by Cys299, Cys304, Cys307, and Cys337.

It in the N-terminal section; belongs to the FAD-binding oxidoreductase type 6 family. Requires [2Fe-2S] cluster as cofactor. It depends on FAD as a cofactor.

The protein operates within aromatic compound metabolism; phenylacetate degradation. Its function is as follows. Component of 1,2-phenylacetyl-CoA epoxidase multicomponent enzyme system which catalyzes the reduction of phenylacetyl-CoA (PA-CoA) to form 1,2-epoxyphenylacetyl-CoA. The subunit E is a reductase with a preference for NADPH and FAD, capable of reducing cytochrome c. The chain is 1,2-phenylacetyl-CoA epoxidase, subunit E (paaE) from Escherichia coli (strain K12).